The sequence spans 272 residues: 3-methyl-2-oxobutanoate hydroxymethyltransferase (272 aa).

The Mg(2+) site is built by Asp-42 and Asp-86. Residues 42–43 (DS), Asp-86, and Lys-116 contribute to the 3-methyl-2-oxobutanoate site. Glu-118 provides a ligand contact to Mg(2+). The Proton acceptor role is filled by Glu-185. The segment at 251–272 (LKEQRDQRATPTTPPPPPAPDC) is disordered. Pro residues predominate over residues 262–272 (TTPPPPPAPDC).

This sequence belongs to the PanB family. Homodecamer; pentamer of dimers. It depends on Mg(2+) as a cofactor.

Its subcellular location is the cytoplasm. It carries out the reaction 3-methyl-2-oxobutanoate + (6R)-5,10-methylene-5,6,7,8-tetrahydrofolate + H2O = 2-dehydropantoate + (6S)-5,6,7,8-tetrahydrofolate. It functions in the pathway cofactor biosynthesis; (R)-pantothenate biosynthesis; (R)-pantoate from 3-methyl-2-oxobutanoate: step 1/2. Its function is as follows. Catalyzes the reversible reaction in which hydroxymethyl group from 5,10-methylenetetrahydrofolate is transferred onto alpha-ketoisovalerate to form ketopantoate. The chain is 3-methyl-2-oxobutanoate hydroxymethyltransferase from Synechococcus sp. (strain CC9311).